A 165-amino-acid polypeptide reads, in one-letter code: uncharacterized protein (165 aa).

Residues 28–97 (EASAPSGNPP…QLSQSLEVPT (70 aa)) are disordered. The span at 34 to 47 (GNPPPPPPPPPPPI) shows a compositional bias: pro residues. Composition is skewed to polar residues over residues 54 to 66 (KSLN…QLDN) and 73 to 94 (AQHT…QSLE).

This is an uncharacterized protein from Rickettsia prowazekii (strain Madrid E).